The primary structure comprises 117 residues: Large ribosomal subunit protein bL19 (117 aa).

This sequence belongs to the bacterial ribosomal protein bL19 family.

This protein is located at the 30S-50S ribosomal subunit interface and may play a role in the structure and function of the aminoacyl-tRNA binding site. The protein is Large ribosomal subunit protein bL19 of Exiguobacterium sibiricum (strain DSM 17290 / CCUG 55495 / CIP 109462 / JCM 13490 / 255-15).